We begin with the raw amino-acid sequence, 355 residues long: Methionine import ATP-binding protein MetN (355 aa).

The ABC transporter domain maps to 8–250 (LKNIDITFTQ…PQEDLTQEFI (243 aa)). 42–49 (GYSGAGKS) contacts ATP.

The protein belongs to the ABC transporter superfamily. Methionine importer (TC 3.A.1.24) family. As to quaternary structure, the complex is composed of two ATP-binding proteins (MetN), two transmembrane proteins (MetI) and a solute-binding protein (MetQ).

Its subcellular location is the cell membrane. It carries out the reaction L-methionine(out) + ATP + H2O = L-methionine(in) + ADP + phosphate + H(+). It catalyses the reaction D-methionine(out) + ATP + H2O = D-methionine(in) + ADP + phosphate + H(+). In terms of biological role, part of the ABC transporter complex MetNIQ involved in methionine import. Responsible for energy coupling to the transport system. This chain is Methionine import ATP-binding protein MetN, found in Streptococcus thermophilus (strain CNRZ 1066).